The primary structure comprises 646 residues: Long-chain fatty acid transport protein 1 (646 aa).

Residues 1–13 are Extracellular-facing; it reads MRTPGAGTASVAS. Residues 14 to 34 traverse the membrane as a helical segment; it reads LGLLWLLGLPWTWSAAAAFGV. The Cytoplasmic portion of the chain corresponds to 35–646; sequence YVGSGGWRFL…ARICAGDFSL (612 aa). Positions 191–475 are sufficient for oligomerization; sequence EVSEQLGKSL…YVSDSATNKK (285 aa). 246–257 is a binding site for AMP; sequence YIYTSGTTGLPK.

It belongs to the ATP-dependent AMP-binding enzyme family. Self-associates. May function as a homodimer. Interacts with EPRS1; mediates the translocation of SLC27A1 from the cytoplasm to the plasma membrane thereby increasing the uptake of long-chain fatty acids. Interacts with DGAT2 and this interaction is enhanced in the presence of ZFYVE1. In terms of tissue distribution, expressed in muscle.

It is found in the cell membrane. Its subcellular location is the endomembrane system. It localises to the cytoplasm. It catalyses the reaction a fatty acid(in) = a fatty acid(out). The catalysed reaction is (9Z)-octadecenoate(out) = (9Z)-octadecenoate(in). The enzyme catalyses hexadecanoate(out) = hexadecanoate(in). It carries out the reaction (5Z,8Z,11Z,14Z)-eicosatetraenoate(out) = (5Z,8Z,11Z,14Z)-eicosatetraenoate(in). It catalyses the reaction (9Z,12Z)-octadecadienoate(out) = (9Z,12Z)-octadecadienoate(in). The catalysed reaction is a long-chain fatty acid + ATP + CoA = a long-chain fatty acyl-CoA + AMP + diphosphate. The enzyme catalyses (5Z,8Z,11Z,14Z)-eicosatetraenoate + ATP + CoA = (5Z,8Z,11Z,14Z)-eicosatetraenoyl-CoA + AMP + diphosphate. It carries out the reaction a very long-chain fatty acid + ATP + CoA = a very long-chain fatty acyl-CoA + AMP + diphosphate. It catalyses the reaction tetracosanoate + ATP + CoA = tetracosanoyl-CoA + AMP + diphosphate. Its activity is regulated as follows. Inhibited by Triacsin C. Its function is as follows. Mediates the import of long-chain fatty acids (LCFA) into the cell by facilitating their transport at the plasma membrane. Also functions as an acyl-CoA ligase catalyzing the ATP-dependent formation of fatty acyl-CoA using LCFA and very-long-chain fatty acids (VLCFA) as substrates, which prevents fatty acid efflux from cells and might drive more fatty acid uptake. May act directly as a bona fide transporter, or alternatively, in a cytoplasmic or membrane-associated multimeric protein complex to trap and draw fatty acids towards accumulation. Plays a pivotal role in regulating available LCFA substrates from exogenous sources in tissues undergoing high levels of beta-oxidation or triglyceride synthesis. May be involved in regulation of cholesterol metabolism. Probably involved in fatty acid transport across the blood barrier. This is Long-chain fatty acid transport protein 1 from Rattus norvegicus (Rat).